A 514-amino-acid polypeptide reads, in one-letter code: Membrane-bound lytic murein transglycosylase F (514 aa).

The first 30 residues, 1–30 (MKKLKINYLFIGILTLLLAAALWPSIPWFG), serve as a signal peptide directing secretion. A non-LT domain region spans residues 31-269 (KTENHIAAIQ…RIEEKYLGHG (239 aa)). The LT domain stretch occupies residues 270-514 (DDFDYVDTRS…LFTPQKKEEK (245 aa)). Residue E314 is part of the active site.

In the N-terminal section; belongs to the bacterial solute-binding protein 3 family. This sequence in the C-terminal section; belongs to the transglycosylase Slt family.

The protein resides in the cell outer membrane. It catalyses the reaction Exolytic cleavage of the (1-&gt;4)-beta-glycosidic linkage between N-acetylmuramic acid (MurNAc) and N-acetylglucosamine (GlcNAc) residues in peptidoglycan, from either the reducing or the non-reducing ends of the peptidoglycan chains, with concomitant formation of a 1,6-anhydrobond in the MurNAc residue.. In terms of biological role, murein-degrading enzyme that degrades murein glycan strands and insoluble, high-molecular weight murein sacculi, with the concomitant formation of a 1,6-anhydromuramoyl product. Lytic transglycosylases (LTs) play an integral role in the metabolism of the peptidoglycan (PG) sacculus. Their lytic action creates space within the PG sacculus to allow for its expansion as well as for the insertion of various structures such as secretion systems and flagella. The sequence is that of Membrane-bound lytic murein transglycosylase F from Salmonella choleraesuis (strain SC-B67).